Consider the following 369-residue polypeptide: MSERRIHYSQLKNDNLNQISPSSAPSPITLNHQLTDSSSSSSSGGNNRISPIILFIIVLLSVIFFICSILHLLVRYYLKKKRSNLSSSPNESNQNPEFSDSDTYQRQLQQLFHLHDSGLDQALIDALPVFLYKEIKGTKEPFDCAVCLCEFSEDDKLRLLPNCSHAFHIDCIDTWLLSNSTCPLCRGTLFSLGHQFEYPDFNFGFFAGDDGGGGVRVSPVQKPAENEIGKRVFSVRLGKFRSSNIVNNGEVVVGGGGETSSSSLDNRRCFSMGSYQYIVAESDLVVALCPNNEGLKNNKDVEGKKINMRSKGESFSVSKIWQWSNKRSKFPNNHPSETNLVVGGSSSSSSYVCSGSDGLSLNGRRFQGP.

A helical membrane pass occupies residues 52–72 (IILFIIVLLSVIFFICSILHL). An RING-type; atypical zinc finger spans residues 144 to 186 (CAVCLCEFSEDDKLRLLPNCSHAFHIDCIDTWLLSNSTCPLCR). A disordered region spans residues 332 to 355 (NNHPSETNLVVGGSSSSSSYVCSG). Positions 341–355 (VVGGSSSSSSYVCSG) are enriched in low complexity.

It belongs to the RING-type zinc finger family. ATL subfamily.

It localises to the membrane. It catalyses the reaction S-ubiquitinyl-[E2 ubiquitin-conjugating enzyme]-L-cysteine + [acceptor protein]-L-lysine = [E2 ubiquitin-conjugating enzyme]-L-cysteine + N(6)-ubiquitinyl-[acceptor protein]-L-lysine.. The protein operates within protein modification; protein ubiquitination. This Arabidopsis thaliana (Mouse-ear cress) protein is RING-H2 finger protein ATL47 (ATL47).